Reading from the N-terminus, the 124-residue chain is Small ribosomal subunit protein uS13c (124 aa).

A disordered region spans residues 100–124; it reads GQRTRTNARTRKGKVKTAVAKKKGR. Positions 101-124 are enriched in basic residues; it reads QRTRTNARTRKGKVKTAVAKKKGR.

The protein belongs to the universal ribosomal protein uS13 family. In terms of assembly, part of the 30S ribosomal subunit.

Its subcellular location is the plastid. The protein localises to the chloroplast. Located at the top of the head of the 30S subunit, it contacts several helices of the 16S rRNA. This Emiliania huxleyi (Coccolithophore) protein is Small ribosomal subunit protein uS13c.